Reading from the N-terminus, the 189-residue chain is 3-hydroxyanthranilate 3,4-dioxygenase (189 aa).

O2 is bound at residue Arg50. Fe cation-binding residues include His54, Glu60, and His102. Glu60 serves as a coordination point for substrate. Substrate contacts are provided by Arg106 and Glu116. A divalent metal cation-binding residues include Cys131, Cys136, Cys170, and Cys173.

This sequence belongs to the 3-HAO family. Fe(2+) is required as a cofactor.

Its subcellular location is the cytoplasm. It catalyses the reaction 3-hydroxyanthranilate + O2 = (2Z,4Z)-2-amino-3-carboxymuconate 6-semialdehyde. The protein operates within cofactor biosynthesis; NAD(+) biosynthesis; quinolinate from L-kynurenine: step 3/3. In terms of biological role, catalyzes the oxidative ring opening of 3-hydroxyanthranilate to 2-amino-3-carboxymuconate semialdehyde, which spontaneously cyclizes to quinolinate. This Aspergillus niger (strain ATCC MYA-4892 / CBS 513.88 / FGSC A1513) protein is 3-hydroxyanthranilate 3,4-dioxygenase (bna1).